A 173-amino-acid chain; its full sequence is Ribosome maturation factor RimM (173 aa).

A PRC barrel domain is found at 78–157; that stretch reads EEEFYLADLI…VLVVPPEEVE (80 aa). Positions 152 to 173 are disordered; sequence PPEEVEAQEPPEKDAGGDEPSP.

It belongs to the RimM family. Binds ribosomal protein uS19.

The protein localises to the cytoplasm. An accessory protein needed during the final step in the assembly of 30S ribosomal subunit, possibly for assembly of the head region. Essential for efficient processing of 16S rRNA. May be needed both before and after RbfA during the maturation of 16S rRNA. It has affinity for free ribosomal 30S subunits but not for 70S ribosomes. The sequence is that of Ribosome maturation factor RimM from Beijerinckia indica subsp. indica (strain ATCC 9039 / DSM 1715 / NCIMB 8712).